The primary structure comprises 1167 residues: mRNA 3'-end-processing protein rna-14 (1167 aa).

The tract at residues 1–245 (MSDDYDPTNI…DPTPVTQPAP (245 aa)) is disordered. 2 stretches are compositionally biased toward acidic residues: residues 16 to 26 (EEQEDYGEADG) and 70 to 79 (NTDDVGDDYD). Low complexity predominate over residues 102 to 111 (TAPQPAAPVA). Over residues 124–137 (DSDDEDEDGDDDGE) the composition is skewed to acidic residues. 2 stretches are compositionally biased toward low complexity: residues 138-150 (PQQQ…QQQP) and 159-191 (GSGA…PQTA). Positions 192–218 (TLTVQDNAGATTFNAPPVPQQVSHQSG) are enriched in polar residues. The segment covering 219–245 (ATTAAVPTTPSSAAPAVDPTPVTQPAP) has biased composition (low complexity). HAT repeat units follow at residues 277-309 (NDID…LELS), 311-342 (NNFP…YIRR), 352-387 (QARQ…FIKF), 401-434 (QKMD…FEMG), 471-504 (TNLP…WEKS), and 518-550 (LYQK…WCFD). Residues 882-893 (QQQPQLPMSQRD) show a composition bias toward polar residues. Disordered regions lie at residues 882–980 (QQQP…SGAG) and 1075–1167 (AYRE…PPPY). Low complexity predominate over residues 908–922 (SPSAGPGAPFAPYAA). Residues 924-946 (RPLDDRDYDDHPRKIARSEHDPF) are compositionally biased toward basic and acidic residues. Over residues 969 to 979 (GAAGAYSGSGA) the composition is skewed to gly residues. Over residues 1079–1090 (SPGPLGGRPLSP) the composition is skewed to low complexity. The span at 1121 to 1134 (EPPPAAQYGVPPPA) shows a compositional bias: pro residues. A compositionally biased stretch (low complexity) spans 1135 to 1151 (QYDGGWAQQQQQQQYGQ).

It localises to the nucleus. Its subcellular location is the cytoplasm. Its function is as follows. Component of the cleavage factor IA (CFIA) complex, which is involved in the endonucleolytic cleavage during polyadenylation-dependent pre-mRNA 3'-end formation. The protein is mRNA 3'-end-processing protein rna-14 (rna-14) of Neurospora crassa (strain ATCC 24698 / 74-OR23-1A / CBS 708.71 / DSM 1257 / FGSC 987).